A 282-amino-acid chain; its full sequence is S-formylglutathione hydrolase (282 aa).

Alanine 2 is modified (N-acetylalanine). Lysine 4 carries the post-translational modification N6-succinyllysine. Residues serine 149, aspartate 226, and histidine 260 each act as charge relay system in the active site.

The protein belongs to the esterase D family. As to quaternary structure, homodimer.

Its subcellular location is the cytoplasm. The protein localises to the cytoplasmic vesicle. The enzyme catalyses S-formylglutathione + H2O = formate + glutathione + H(+). Its function is as follows. Serine hydrolase involved in the detoxification of formaldehyde. In Bos taurus (Bovine), this protein is S-formylglutathione hydrolase (ESD).